The primary structure comprises 113 residues: TYRO protein tyrosine kinase-binding protein (113 aa).

An N-terminal signal peptide occupies residues 1–21 (MGGLEPCSRLLLLPLLLAVSG). Topologically, residues 22–40 (LRPVQAQAQSDCSCSTVSP) are extracellular. Residues 41–61 (GVLAGIVMGDLVLTVLIALAV) form a helical membrane-spanning segment. Asp-50 is a Ca(2+) binding site. Residues 62–113 (YFLGRLVPRGRGAAEAATRKQRITETESPYQELQGQRSDVYSDLNTQRPYYK) are Cytoplasmic-facing. Residues 75-113 (AEAATRKQRITETESPYQELQGQRSDVYSDLNTQRPYYK) are disordered. The ITAM domain maps to 80–108 (RKQRITETESPYQELQGQRSDVYSDLNTQ). A compositionally biased stretch (polar residues) spans 87–113 (TESPYQELQGQRSDVYSDLNTQRPYYK). Tyr-91 and Tyr-102 each carry phosphotyrosine.

This sequence belongs to the TYROBP family. As to quaternary structure, homodimer; disulfide-linked. Homotrimer; disulfide-linked. Homotetramer; disulfide-linked. Homotrimers and homotetramers form when low levels of partner receptors are available and are competitive with assembly with interacting receptors. They may represent alternative oligomerization states or may be intermediates in the receptor assembly process. Binding of a metal cation aids in homooligomerization through coordination of the metal ion by the subunits of the oligomer. Interacts with TREM1. Interacts with TREM2. Interacts with SIRPB1. Interacts with CLECSF5. Interacts with SIGLEC14. Interacts with CD300LB and CD300E. Interacts with CD300C2. Interacts (via ITAM domain) with SYK (via SH2 domains); activates SYK mediating neutrophil and macrophage integrin-mediated activation. Interacts with KLRC2, KIR2DS3 and KIR2DS5. Interacts with CD300H. Interacts with KIR2DS1. Interacts with KLRD1. Interacts with SIGLEC1. Following ligand binding by associated receptors, tyrosine phosphorylated in the ITAM domain which leads to activation of additional tyrosine kinases and subsequent cell activation. In terms of tissue distribution, expressed at low levels in the early development of the hematopoietic system and in the promonocytic stage and at high levels in mature monocytes. Expressed in hematological cells and tissues such as peripheral blood leukocytes and spleen. Also found in bone marrow, lymph nodes, placenta, lung and liver. Expressed at lower levels in different parts of the brain especially in the basal ganglia and corpus callosum.

Its subcellular location is the cell membrane. Functionally, adapter protein which non-covalently associates with activating receptors found on the surface of a variety of immune cells to mediate signaling and cell activation following ligand binding by the receptors. TYROBP is tyrosine-phosphorylated in the ITAM domain following ligand binding by the associated receptors which leads to activation of additional tyrosine kinases and subsequent cell activation. Also has an inhibitory role in some cells. Non-covalently associates with activating receptors of the CD300 family to mediate cell activation. Also mediates cell activation through association with activating receptors of the CD200R family. Required for neutrophil activation mediated by integrin. Required for the activation of myeloid cells mediated by the CLEC5A/MDL1 receptor. Associates with natural killer (NK) cell receptors such as KIR2DS2 and the KLRD1/KLRC2 heterodimer to mediate NK cell activation. Also enhances trafficking and cell surface expression of NK cell receptors KIR2DS1, KIR2DS2 and KIR2DS4 and ensures their stability at the cell surface. Associates with SIRPB1 to mediate activation of myeloid cells such as monocytes and dendritic cells. Associates with TREM1 to mediate activation of neutrophils and monocytes. Associates with TREM2 on monocyte-derived dendritic cells to mediate up-regulation of chemokine receptor CCR7 and dendritic cell maturation and survival. Association with TREM2 mediates cytokine-induced formation of multinucleated giant cells which are formed by the fusion of macrophages. Stabilizes the TREM2 C-terminal fragment (TREM2-CTF) produced by TREM2 ectodomain shedding which suppresses the release of pro-inflammatory cytokines. In microglia, required with TREM2 for phagocytosis of apoptotic neurons. Required with ITGAM/CD11B in microglia to control production of microglial superoxide ions which promote the neuronal apoptosis that occurs during brain development. Promotes pro-inflammatory responses in microglia following nerve injury which accelerates degeneration of injured neurons. Positively regulates the expression of the IRAK3/IRAK-M kinase and IL10 production by liver dendritic cells and inhibits their T cell allostimulatory ability. Negatively regulates B cell proliferation. Required for CSF1-mediated osteoclast cytoskeletal organization. Positively regulates multinucleation during osteoclast development. This is TYRO protein tyrosine kinase-binding protein from Homo sapiens (Human).